A 38-amino-acid polypeptide reads, in one-letter code: Mu/omega-theraphotoxin-Mb1a (38 aa).

Cystine bridges form between C7/C21, C14/C26, and C20/C33. Residue T38 is modified to Threonine amide.

The protein belongs to the neurotoxin 10 (Hwtx-1) family. 28 (Jztx-11) subfamily. Expressed by the venom gland.

It is found in the secreted. In terms of biological role, paralytic toxin that inhibits insect voltage-gated sodium (Nav) and calcium (Cav) channels in P.americana (American cockroach) dorsal unpaired median (DUM) neurons, and inhibits the B.germanica (German cockroach) Nav channel (BgNaV1). Also shows a delay in fast inactivation when tested on BgNaV1. May act as a gating-modifier toxin on Nav and as a pore blocker on Cav. In vivo, reversibly paralyzes both L.cuprina (Australian sheep blowfly) and M.domestica (housefly), but does not affect larvae of H.armigera (cotton bollworms). In Monocentropus balfouri (Socotra Island blue baboon tarantula), this protein is Mu/omega-theraphotoxin-Mb1a.